The primary structure comprises 562 residues: NAD-dependent malic enzyme (562 aa).

Tyr101 serves as the catalytic Proton donor. Arg154 contacts NAD(+). Lys172 functions as the Proton acceptor in the catalytic mechanism. 3 residues coordinate a divalent metal cation: Glu243, Asp244, and Asp267. 2 residues coordinate NAD(+): Asp267 and Asn415.

The protein belongs to the malic enzymes family. Homotetramer. The cofactor is Mg(2+). Requires Mn(2+) as cofactor.

It catalyses the reaction (S)-malate + NAD(+) = pyruvate + CO2 + NADH. It carries out the reaction oxaloacetate + H(+) = pyruvate + CO2. The chain is NAD-dependent malic enzyme from Shewanella sediminis (strain HAW-EB3).